A 350-amino-acid chain; its full sequence is Biotin synthase (350 aa).

Residues Asn-41 to Arg-268 form the Radical SAM core domain. Residues Cys-56, Cys-60, and Cys-63 each contribute to the [4Fe-4S] cluster site. [2Fe-2S] cluster is bound by residues Cys-100, Cys-131, Cys-191, and Arg-263.

Belongs to the radical SAM superfamily. Biotin synthase family. Homodimer. [4Fe-4S] cluster is required as a cofactor. The cofactor is [2Fe-2S] cluster.

The catalysed reaction is (4R,5S)-dethiobiotin + (sulfur carrier)-SH + 2 reduced [2Fe-2S]-[ferredoxin] + 2 S-adenosyl-L-methionine = (sulfur carrier)-H + biotin + 2 5'-deoxyadenosine + 2 L-methionine + 2 oxidized [2Fe-2S]-[ferredoxin]. It functions in the pathway cofactor biosynthesis; biotin biosynthesis; biotin from 7,8-diaminononanoate: step 2/2. Functionally, catalyzes the conversion of dethiobiotin (DTB) to biotin by the insertion of a sulfur atom into dethiobiotin via a radical-based mechanism. This chain is Biotin synthase, found in Shewanella pealeana (strain ATCC 700345 / ANG-SQ1).